Consider the following 2864-residue polypeptide: Genome polyprotein (2864 aa).

Polar residues-rich tracts occupy residues 1 to 10 (MPVISTQTSP) and 21 to 32 (QTQASYPVSIKT). A disordered region spans residues 1 to 49 (MPVISTQTSPVPAPRTRKNKQTQASYPVSIKTSVERGQRAKRKVQRDAR). The chain crosses the membrane as a helical span at residues 133–153 (WATGWFGVHLFVVCLLSLACP). Residues Asn-165, Asn-212, and Asn-264 are each glycosylated (N-linked (GlcNAc...) asparagine; by host). Residues 324–344 (LIYYASRGKWYQLLLALMLYI) form a helical membrane-spanning segment. Residues Asn-380, Asn-400, Asn-422, Asn-446, Asn-467, and Asn-512 are each glycosylated (N-linked (GlcNAc...) asparagine; by host). 5 consecutive transmembrane segments (helical) span residues 582–602 (AVVL…AYLC), 628–648 (AGWD…FFIC), 660–680 (LLGF…AAAA), 706–726 (PRIA…LLHL), and 737–757 (IIGG…RFGF). The N-linked (GlcNAc...) asparagine; by host glycan is linked to Asn-782. 2 helical membrane-spanning segments follow: residues 790 to 810 (FLLV…TFCV) and 847 to 867 (WYSH…GVFF). The Peptidase C18 domain maps to 819–940 (TSSAASFFGT…AMPPDGWAIT (122 aa)). Active-site for protease NS2 activity; shared with dimeric partner residues include His-870, Glu-888, and Cys-909. Positions 941-1122 (APFTLQCLSE…VCAGYHPQYT (182 aa)) constitute a Peptidase S29 domain. Residues His-997 and Asp-1021 each act as charge relay system; for serine protease NS3 activity in the active site. Zn(2+) contacts are provided by Cys-1037 and Cys-1039. Residue Asn-1057 is glycosylated (N-linked (GlcNAc...) asparagine; by host). Ser-1079 functions as the Charge relay system; for serine protease NS3 activity in the catalytic mechanism. 2 residues coordinate Zn(2+): Cys-1085 and His-1089. In terms of domain architecture, Helicase ATP-binding spans 1131-1281 (PTVPNEYSVQ…ANITEIQLTD (151 aa)). 1144 to 1151 (APTGSGKS) contacts ATP. Mg(2+) is bound by residues Ser-1151 and Glu-1229. The short motif at 1228-1231 (DECH) is the DECH box element. Asn-1273 carries N-linked (GlcNAc...) asparagine; by host glycosylation. A Helicase C-terminal domain is found at 1284–1449 (TIPFHGKKIK…GLSSTEAQTI (166 aa)). Asn-1559 is a glycosylation site (N-linked (GlcNAc...) asparagine; by host). Helical transmembrane passes span 1565 to 1585 (ALAV…FGAT), 1653 to 1673 (FLGP…GLVT), 1678 to 1698 (PFAS…PHKI), 1722 to 1742 (FMMA…GFVF), and 1783 to 1803 (AAGV…TAGP). The S-palmitoyl cysteine; by host moiety is linked to residue Cys-1863. A helical transmembrane segment spans residues 1864 to 1884 (GLIAWGLEIWQYVCNFFVICF). Positions 1905, 1923, 1925, and 1947 each coordinate Zn(2+). Disordered stretches follow at residues 2139–2178 (TGSL…SPPV) and 2209–2266 (GPDD…TKKK). Polar residues predominate over residues 2226-2240 (SDGSWSTTTTASSYV). A RdRp catalytic domain is found at 2485–2603 (AVGATCDTVC…IWKSAGADAD (119 aa)). The Mg(2+) site is built by Asp-2491, Asp-2589, and Asp-2590. 2 N-linked (GlcNAc...) asparagine; by host glycosylation sites follow: Asn-2640 and Asn-2722. A helical transmembrane segment spans residues 2844 to 2864 (VKYLAVIVFALGLIAVGLAIS).

As to quaternary structure, homooligomer. Interacts with E1 (via C-terminus). Interacts with the non-structural protein 5A. Part of the viral assembly initiation complex composed of NS2, E1, E2, NS3, NS4A, NS5A and the core protein. In terms of assembly, forms a heterodimer with envelope glycoprotein E2. Interacts with the core protein. Interacts with protease NS2. Part of the viral assembly initiation complex composed of NS2, E1, E2, NS3, NS4A, NS5A and the core protein. Forms a heterodimer with envelope glycoprotein E1. Part of the viral assembly initiation complex composed of NS2, E1, E2, NS3, NS4A, NS5A and the core protein. As to quaternary structure, homodimer. Interacts with envelope glycoprotein E1. Interacts with envelope glycoprotein E2. Interacts with viroporin p7. Interacts with serine protease/helicase NS3. Part of the replication complex composed of NS2, NS3, NS4A, NS4B, NS5A and the RNA-directed RNA polymerase embedded in an ER-derived membranous web. Part of the viral assembly initiation complex composed of NS2, E1, E2, NS3, NS4A, NS5A and the core protein. In terms of assembly, interacts with protease NS2. Interacts with non-structural protein 4A; this interaction stabilizes the folding of NS3 serine protease. NS3-NS4A interaction is essential for NS3 activation and allows membrane anchorage of the latter. Interacts with host MAVS; this interaction leads to the cleavage and inhibition of host MAVS. Part of the replication complex composed of NS2, NS3, NS4A, NS4B, NS5A and the RNA-directed RNA polymerase embedded in an ER-derived membranous web. Part of the viral assembly initiation complex composed of NS2, E1, E2, NS3, NS4A, NS5A and the core protein. Interacts with NS3 serine protease; this interaction stabilizes the folding of NS3 serine protease. NS3-NS4A interaction is essential for NS3 activation and allows membrane anchorage of the latter. Interacts with non-structural protein 5A (via N-terminus). Part of the replication complex composed of NS2, NS3, NS4A, NS4B, NS5A and the RNA-directed RNA polymerase embedded in an ER-derived membranous web. Part of the viral assembly initiation complex composed of NS2, E1, E2, NS3, NS4A, NS5A and the core protein. As to quaternary structure, monomer. Homodimer; dimerization is required for RNA-binding. Interacts with the core protein. Interacts (via N-terminus) with non-structural protein 4A. Interacts with non-structural protein 4B. Interacts with RNA-directed RNA polymerase. Part of the viral assembly initiation complex composed of NS2, E1, E2, NS3, NS4A, NS5A and the core protein. Part of the replication complex composed of NS2, NS3, NS4A, NS4B, NS5A and the RNA-directed RNA polymerase. It depends on Zn(2+) as a cofactor. Mg(2+) serves as cofactor. Mn(2+) is required as a cofactor. Post-translationally, specific enzymatic cleavages in vivo yield mature proteins. The structural proteins, core, E1, E2 and p7 are produced by proteolytic processing by host signal peptidases. The other proteins (p7, NS2, NS3, NS4A, NS4B, NS5A and NS5B) are cleaved by the viral proteases. Autoprocessing between NS2 and NS3 is mediated by the NS2 cysteine protease catalytic domain and regulated by the NS3 N-terminal domain. P13 may be further cleaved into p6 and p7 if the internal cleavage site is used. Highly N-glycosylated. In terms of processing, palmitoylated. This modification may play a role in its polymerization or in protein-protein interactions.

It localises to the virion. It is found in the host cytoplasm. Its subcellular location is the host lipid droplet. The protein resides in the virion membrane. The protein localises to the host endoplasmic reticulum membrane. It localises to the host perinuclear region. It is found in the host mitochondrion. Its subcellular location is the host nucleus. The enzyme catalyses Hydrolysis of four peptide bonds in the viral precursor polyprotein, commonly with Asp or Glu in the P6 position, Cys or Thr in P1 and Ser or Ala in P1'.. It catalyses the reaction a ribonucleoside 5'-triphosphate + H2O = a ribonucleoside 5'-diphosphate + phosphate + H(+). The catalysed reaction is ATP + H2O = ADP + phosphate + H(+). It carries out the reaction RNA(n) + a ribonucleoside 5'-triphosphate = RNA(n+1) + diphosphate. Packages viral RNA to form a viral nucleocapsid, and promotes virion budding. Participates in the viral particle production as a result of its interaction with the non-structural protein 5A. Binds RNA and may function as a RNA chaperone to induce the RNA structural rearrangements taking place during virus replication. Modulates viral translation initiation by interacting with viral IRES and 40S ribosomal subunit. Probably affects various cell signaling pathways, host immunity and lipid metabolism. Functionally, forms a heterodimer with envelope glycoprotein E2, which mediates virus attachment to the host cell, virion internalization through clathrin-dependent endocytosis and fusion with host membrane. Fusion with the host cell is most likely mediated by both E1 and E2, through conformational rearrangements of the heterodimer required for fusion rather than a classical class II fusion mechanism. In terms of biological role, forms a heterodimer with envelope glycoprotein E1, which mediates virus attachment to the host cell, virion internalization through clathrin-dependent endocytosis and fusion with host membrane. Fusion with the host cell is most likely mediated by both E1 and E2, through conformational rearrangements of the heterodimer required for fusion rather than a classical class II fusion mechanism. Its function is as follows. May function as a multimeric ion channel protein (viroporin). Cysteine protease required for the proteolytic auto-cleavage between the non-structural proteins NS2 and NS3. The N-terminus of NS3 is required for the function of NS2 protease (active region NS2-3). Promotes the initiation of viral particle assembly by mediating the interaction between structural and non-structural proteins. Functionally, displays three enzymatic activities: serine protease with a chymotrypsin-like fold, NTPase and RNA helicase. NS3 serine protease, in association with NS4A, is responsible for the cleavages of NS3-NS4A, NS4A-NS4B, NS4B-NS5A and NS5A-NS5B. The NS3/NS4A complex prevents phosphorylation of host IRF3, thus preventing the establishment of dsRNA induced antiviral state. NS3 RNA helicase binds to RNA and unwinds both dsDNA and dsRNA in the 3' to 5' direction, and likely resolves RNA complicated stable secondary structures in the template strand. Cleaves host MAVS/CARDIF thereby preventing the establishment of an antiviral state. In terms of biological role, induces a specific membrane alteration that serves as a scaffold for the virus replication complex. This membrane alteration gives rise to the so-called ER-derived membranous web that contains the replication complex. NS4B self-interaction contributes to its function in membranous web formation. Its function is as follows. Phosphorylated protein that is indispensable for viral replication and assembly. RNA-dependent RNA polymerase that performs primer-template recognition and RNA synthesis during viral replication. Initiates RNA transcription/replication at a flavin adenine dinucleotide (FAD), resulting in a 5'- FAD cap on viral RNAs. In this way, recognition of viral 5' RNA by host pattern recognition receptors can be bypassed, thereby evading activation of antiviral pathways. In Hepatitis GB virus B (GBV-B), this protein is Genome polyprotein.